The following is an 889-amino-acid chain: Cytoplasmic aconitate hydratase (889 aa).

Residues glutamine 86 and 205-207 each bind substrate; that span reads DSH. 3 residues coordinate [4Fe-4S] cluster: cysteine 437, cysteine 503, and cysteine 506. Substrate-binding positions include arginine 536, arginine 541, arginine 699, and 779–780; that span reads SR.

This sequence belongs to the aconitase/IPM isomerase family. As to quaternary structure, interacts (when associated with the 4Fe-4S) with FBXL5. Interacts with frataxin(81-210). [4Fe-4S] cluster serves as cofactor.

The protein resides in the cytoplasm. It is found in the cytosol. It carries out the reaction citrate = D-threo-isocitrate. Functionally, bifunctional iron sensor that switches between 2 activities depending on iron availability. Iron deprivation, promotes its mRNA binding activity through which it regulates the expression of genes involved in iron uptake, sequestration and utilization. Binds to iron-responsive elements (IRES) in the untranslated region of target mRNAs preventing for instance the translation of ferritin and aminolevulinic acid synthase and stabilizing the transferrin receptor mRNA. In terms of biological role, conversely, when cellular iron levels are high, binds a 4Fe-4S cluster which precludes RNA binding activity and promotes the aconitase activity, the isomerization of citrate to isocitrate via cis-aconitate. The sequence is that of Cytoplasmic aconitate hydratase (Aco1) from Rattus norvegicus (Rat).